A 255-amino-acid polypeptide reads, in one-letter code: Ribonuclease HII (255 aa).

The RNase H type-2 domain occupies 72 to 255; that stretch reads RLIAGVDEAG…KTFAPVQSYC (184 aa). The a divalent metal cation site is built by D78, E79, and D170.

It belongs to the RNase HII family. Mn(2+) serves as cofactor. Requires Mg(2+) as cofactor.

The protein resides in the cytoplasm. It catalyses the reaction Endonucleolytic cleavage to 5'-phosphomonoester.. Its function is as follows. Endonuclease that specifically degrades the RNA of RNA-DNA hybrids. This Bacillus velezensis (strain DSM 23117 / BGSC 10A6 / LMG 26770 / FZB42) (Bacillus amyloliquefaciens subsp. plantarum) protein is Ribonuclease HII.